The sequence spans 1719 residues: Serine/threonine-protein kinase MRCK alpha (1719 aa).

A Protein kinase domain is found at 77–343; it reads FEILKVIGRG…IEDFKKHPFF (267 aa). ATP-binding positions include 83-91 and K106; that span reads IGRGAFGEV. The Proton acceptor role is filled by D201. A phosphoserine; by autocatalysis mark is found at S222 and S234. T240 carries the phosphothreonine; by autocatalysis modification. Positions 344–414 constitute an AGC-kinase C-terminal domain; the sequence is SGIDWDNIRN…TSSCVLSDRS (71 aa). 3 coiled-coil regions span residues 437–670, 713–820, and 880–943; these read NNLA…KQKQ, SEIK…WEAQ, and LELQ…SEKG. The Phorbol-ester/DAG-type zinc finger occupies 999-1049; sequence THQFFVKSFTAPTKCHQCTSLMVGLIRQGCSCEVCGFSCHITCVNKAPTVC. In terms of domain architecture, PH spans 1069–1188; it reads GTAYEGHVRI…WVGVLSELHK (120 aa). Residues 1214–1486 form the CNH domain; it reads IKTTQAAAII…RPLNTEGSLN (273 aa). A Phosphoserine modification is found at S1532. In terms of domain architecture, CRIB spans 1558-1571; that stretch reads ISNPTNFNHIAHMG. Positions 1579–1719 are disordered; it reads LKDLPMNPRP…ESTDRGSWDP (141 aa). A compositionally biased stretch (polar residues) spans 1591 to 1606; that stretch reads SRTVFSGSVSIPSITK. 9 positions are modified to phosphoserine: S1598, S1600, S1616, S1638, S1651, S1656, S1680, S1706, and S1708. The segment covering 1612–1627 has biased composition (low complexity); sequence GRSMSASSGLSARSSA. Residues 1652 to 1661 are compositionally biased toward low complexity; sequence PSEGSLSSGG.

Belongs to the protein kinase superfamily. AGC Ser/Thr protein kinase family. DMPK subfamily. Homodimer and homotetramer via the coiled coil regions. Interacts tightly with GTP-bound but not GDP-bound CDC42. Forms a tripartite complex with MYO18A and LRP35A with the latter acting as an adapter connecting CDC42BPA and MYO18A. LRP35A binding results in activation of CDC42BPA by abolition of its negative autoregulation. Interacts with LURAP1. Interacts (via AGC-kinase C-terminal domain) with FAM89B/LRAP25 (via LRR repeat). Forms a tripartite complex with FAM89B/LRAP25 and LIMK1. Requires Mg(2+) as cofactor. Proteolytically cleaved by caspases upon apoptosis induction. The cleavage at Asp-478 by CASP3 increases its kinase activity (in vitro).

It localises to the cytoplasm. The protein resides in the cell projection. It is found in the lamellipodium. The catalysed reaction is L-seryl-[protein] + ATP = O-phospho-L-seryl-[protein] + ADP + H(+). It carries out the reaction L-threonyl-[protein] + ATP = O-phospho-L-threonyl-[protein] + ADP + H(+). Maintained in an inactive, closed conformation by an interaction between the kinase domain and the negative autoregulatory C-terminal coiled-coil region. Agonist binding to the phorbol ester binding site disrupts this, releasing the kinase domain to allow N-terminus-mediated dimerization and kinase activation by transautophosphorylation. Inhibited by chelerythrine chloride. Functionally, serine/threonine-protein kinase which is an important downstream effector of CDC42 and plays a role in the regulation of cytoskeleton reorganization and cell migration. Regulates actin cytoskeletal reorganization via phosphorylation of PPP1R12C and MYL9/MLC2. In concert with MYO18A and LRP35A, is involved in modulating lamellar actomyosin retrograde flow that is crucial to cell protrusion and migration. Phosphorylates: PPP1R12A and LIMK2. May play a role in TFRC-mediated iron uptake. In concert with FAM89B/LRAP25 mediates the targeting of LIMK1 to the lamellipodium resulting in its activation and subsequent phosphorylation of CFL1 which is important for lamellipodial F-actin regulation. Triggers the formation of an extrusion apical actin ring required for epithelial extrusion of apoptotic cells. The protein is Serine/threonine-protein kinase MRCK alpha (Cdc42bpa) of Mus musculus (Mouse).